The sequence spans 243 residues: MIGITQAEAVLTIELQRPERRNALNSQLVEELTQAIRKAGDGSARAIVLTGQGTAFCAGADLSGDAFAADYPDRLIELHKAMDASPMPVVGAINGPAIGAGLQLAMQCDLRVVAPDAFFQFPTSKYGLALDNWSIRRLSSLVGHGRARAMLLSAEKLTAEIALHTGMANRIGTLADAQAWAAEIARLAPLAIQHAKRVLNDDGAIEEAWPAHKELFDKAWGSQDVIEAQVARMEKRPPKFQGA.

The protein belongs to the enoyl-CoA hydratase/isomerase family.

The catalysed reaction is a (3S)-3-hydroxyacyl-CoA = a (2E)-enoyl-CoA + H2O. The enzyme catalyses a 4-saturated-(3S)-3-hydroxyacyl-CoA = a (3E)-enoyl-CoA + H2O. Functionally, could possibly oxidize fatty acids using specific components. The chain is Probable enoyl-CoA hydratase echA6 (echA6) from Mycobacterium bovis (strain ATCC BAA-935 / AF2122/97).